A 930-amino-acid chain; its full sequence is Probable outer membrane protein pmp8 (930 aa).

Residues 1-26 (MKIPLHKLLISSTLVTPILLSIATYG) form the signal peptide. In terms of domain architecture, Autotransporter spans 636–930 (SIYQQRGLWA…NVDCGLRYSF (295 aa)).

It belongs to the PMP outer membrane protein family.

It localises to the secreted. The protein localises to the cell wall. Its subcellular location is the cell outer membrane. The polypeptide is Probable outer membrane protein pmp8 (pmp8) (Chlamydia pneumoniae (Chlamydophila pneumoniae)).